The sequence spans 104 residues: Flagellar hook-basal body complex protein FliE (104 aa).

Belongs to the FliE family.

The protein resides in the bacterial flagellum basal body. The protein is Flagellar hook-basal body complex protein FliE of Serratia proteamaculans (strain 568).